We begin with the raw amino-acid sequence, 185 residues long: Large ribosomal subunit protein uL5 (185 aa).

It belongs to the universal ribosomal protein uL5 family. In terms of assembly, part of the 50S ribosomal subunit; part of the 5S rRNA/L5/L18/L25 subcomplex. Contacts the 5S rRNA and the P site tRNA. Forms a bridge to the 30S subunit in the 70S ribosome.

Its function is as follows. This is one of the proteins that bind and probably mediate the attachment of the 5S RNA into the large ribosomal subunit, where it forms part of the central protuberance. In the 70S ribosome it contacts protein S13 of the 30S subunit (bridge B1b), connecting the 2 subunits; this bridge is implicated in subunit movement. Contacts the P site tRNA; the 5S rRNA and some of its associated proteins might help stabilize positioning of ribosome-bound tRNAs. The polypeptide is Large ribosomal subunit protein uL5 (Rhizobium etli (strain ATCC 51251 / DSM 11541 / JCM 21823 / NBRC 15573 / CFN 42)).